The following is a 235-amino-acid chain: Probable inactive serine protease 37 (235 aa).

The first 19 residues, 1 to 19 (MKFTFCLTVLAGTFFSAHS), serve as a signal peptide directing secretion. Positions 20–233 (SVQKDDPSPY…YVSWIESTTK (214 aa)) constitute a Peptidase S1 domain. 3 disulfides stabilise this stretch: C40/C56, C131/C198, and C163/C177.

This sequence belongs to the peptidase S1 family.

The protein localises to the cytoplasmic vesicle. The protein resides in the secretory vesicle. It is found in the acrosome. Its subcellular location is the secreted. Functionally, plays a role in male fertility. May have a role in sperm migration or binding to zona-intact eggs. Involved in the activation of the proacrosin/acrosin system. The sequence is that of Probable inactive serine protease 37 from Bos taurus (Bovine).